Reading from the N-terminus, the 500-residue chain is NAD(P)H-quinone oxidoreductase chain 4, chloroplastic (500 aa).

14 helical membrane passes run 4 to 24 (FPWL…IFFF), 35 to 55 (YTIC…CYHF), 87 to 107 (IGPV…AWPV), 113 to 130 (LFHF…GSFS), 134 to 154 (LLLF…LLSM), 167 to 187 (FILY…GMGL), 208 to 228 (ALEI…LPII), 242 to 262 (HYST…YGLV), 272 to 292 (AHSI…IYAA), 305 to 325 (IAYS…SITD), 330 to 350 (GAIL…FLAG), 386 to 406 (LALP…GIIT), 416 to 436 (ILIT…SLSM), and 463 to 483 (FVSI…DFVF).

It belongs to the complex I subunit 4 family.

Its subcellular location is the plastid. It localises to the chloroplast thylakoid membrane. It carries out the reaction a plastoquinone + NADH + (n+1) H(+)(in) = a plastoquinol + NAD(+) + n H(+)(out). The catalysed reaction is a plastoquinone + NADPH + (n+1) H(+)(in) = a plastoquinol + NADP(+) + n H(+)(out). The sequence is that of NAD(P)H-quinone oxidoreductase chain 4, chloroplastic from Nandina domestica (Heavenly bamboo).